The primary structure comprises 626 residues: Trehalase (626 aa).

Positions methionine 1–alanine 35 are cleaved as a signal peptide. Residues glutamate 36–threonine 595 lie on the Extracellular side of the membrane. Asparagine 104 is a glycosylation site (N-linked (GlcNAc...) asparagine). Substrate contacts are provided by residues arginine 181, tryptophan 188–aspartate 189, asparagine 225, and arginine 234–glutamine 236. Residue asparagine 274 is glycosylated (N-linked (GlcNAc...) asparagine). Residues arginine 299–glutamate 301 and glycine 333 contribute to the substrate site. Residue aspartate 335 is the Proton donor/acceptor of the active site. N-linked (GlcNAc...) asparagine glycans are attached at residues asparagine 350, asparagine 384, asparagine 498, and asparagine 525. The Proton donor/acceptor role is filled by glutamate 532. Glutamate 547 is a binding site for substrate. Residues alanine 596–glycine 616 form a helical membrane-spanning segment. Residues lysine 617 to glutamine 626 are Cytoplasmic-facing.

The protein belongs to the glycosyl hydrolase 37 family. As to quaternary structure, monomer. Glycosylated; contains 3.1% carbohydrates.

It is found in the membrane. It carries out the reaction alpha,alpha-trehalose + H2O = alpha-D-glucose + beta-D-glucose. With respect to regulation, inhibited by sodium, potassium and ammonium ions, and by TEMED. This Apis mellifera (Honeybee) protein is Trehalase.